A 26-amino-acid polypeptide reads, in one-letter code: MVLVKTIKKLDGFIECLLMLNYKFLY.

The protein localises to the plastid. It is found in the chloroplast. This is an uncharacterized protein from Trieres chinensis (Marine centric diatom).